We begin with the raw amino-acid sequence, 623 residues long: MPSTKRYQHVIETPEPGEWELSGYEAAVPITEKSNPLTRNLDKADAEKIVQLLGQCDAEIFQEEGQIMPTYQRLYSESVLTTMLQVAGKVQEVLKEPDGGLVVLSGGGTSGRMAFLMSVSFNQLMKGLGQKPLYTYLIAGGDRSVVASRERTEDSALHGIEELKKVAAGKKRVVVIGISVGLSAPFVAGQMDYCMDNTAVFLPVLVGFNPVSMARNDPIEDWRSTFRQVAERMQKMQEKQEAFVLNPAIGPEGLSGSSRMKGGSATKILLETLLLAAHKTVDQGVVSSQRCLLEILRTFERAHQVTYSQSSKIATLTKQVGISLEKKGHVHLVGWQTLGIIAIMDGVECIHTFGADFRDIRGFLIGDHNDMFNQKDELSNQGPQFTFSQDDFLTSVLPSLTEIDTVVFIFTLDDNLAEVQALAERVREKSWNIQALVHSTVGQSLPAPLKKLFPSLISITWPLLFFDYEGSYVQKFQRELSTKWVLNTVSTGAHVLLGKILQNHMLDLRIANSKLFWRALAMLQRFSGQSKARCIESLLQVIHFPQPLSNDVRAAPISCHVQVAHEKEKVIPTALLSLLLRCSITEAKERLAAASSVCEVVRSALSGPGQKRSIQAFGDPVVP.

SIS domains are found at residues Val90 to Val286 and Val320 to Phe476. Beta-D-fructose 1-phosphate-binding positions include Thr109 to Ser110, Glu153, and Ser179 to Gly181. Thr109–Ser110 lines the beta-D-fructose 6-phosphate pocket. Ser179–Gly181 is a binding site for beta-D-fructose 6-phosphate. The tract at residues Ala199–Val200 is important for interaction with GCK. Glu348 is a beta-D-fructose 1-phosphate binding site. Residues Leu463 to Phe465 form an essential for interaction with GCK region.

This sequence belongs to the GCKR family. As to quaternary structure, interacts (fructose 6-phosphate bound form) with GCK.

The protein localises to the cytoplasm. Its subcellular location is the nucleus. It is found in the mitochondrion. Functionally, regulates glucokinase (GCK) by forming an inactive complex with this enzyme. Acts by promoting GCK recruitment to the nucleus, possibly to provide a reserve of GCK that can be quickly released in the cytoplasm after a meal. The affinity of GCKR for GCK is modulated by fructose metabolites: GCKR with bound fructose 6-phosphate has increased affinity for GCK, while GCKR with bound fructose 1-phosphate has strongly decreased affinity for GCK and does not inhibit GCK activity. The chain is Glucokinase regulatory protein from Mus musculus (Mouse).